The sequence spans 276 residues: Shikimate dehydrogenase (NADP(+)) (276 aa).

Shikimate-binding positions include 18 to 20 (SKS) and Thr65. Lys69 acts as the Proton acceptor in catalysis. Glu81 contacts NADP(+). Shikimate-binding residues include Asn90 and Asp106. Residues 130-134 (GAGGA), 154-159 (NRTSSK), and Met217 each bind NADP(+). Residue Tyr219 coordinates shikimate. Gly241 contributes to the NADP(+) binding site.

Belongs to the shikimate dehydrogenase family. In terms of assembly, homodimer.

The enzyme catalyses shikimate + NADP(+) = 3-dehydroshikimate + NADPH + H(+). It functions in the pathway metabolic intermediate biosynthesis; chorismate biosynthesis; chorismate from D-erythrose 4-phosphate and phosphoenolpyruvate: step 4/7. Its function is as follows. Involved in the biosynthesis of the chorismate, which leads to the biosynthesis of aromatic amino acids. Catalyzes the reversible NADPH linked reduction of 3-dehydroshikimate (DHSA) to yield shikimate (SA). The chain is Shikimate dehydrogenase (NADP(+)) from Vibrio atlanticus (strain LGP32) (Vibrio splendidus (strain Mel32)).